The primary structure comprises 529 residues: Bifunctional purine biosynthesis protein PurH (529 aa).

Residues 1–148 (MQQRRPVRRA…KNHKDVAIVV (148 aa)) enclose the MGS-like domain. At Lys-287 the chain carries N6-acetyllysine.

The protein belongs to the PurH family.

It catalyses the reaction (6R)-10-formyltetrahydrofolate + 5-amino-1-(5-phospho-beta-D-ribosyl)imidazole-4-carboxamide = 5-formamido-1-(5-phospho-D-ribosyl)imidazole-4-carboxamide + (6S)-5,6,7,8-tetrahydrofolate. The enzyme catalyses IMP + H2O = 5-formamido-1-(5-phospho-D-ribosyl)imidazole-4-carboxamide. The protein operates within purine metabolism; IMP biosynthesis via de novo pathway; 5-formamido-1-(5-phospho-D-ribosyl)imidazole-4-carboxamide from 5-amino-1-(5-phospho-D-ribosyl)imidazole-4-carboxamide (10-formyl THF route): step 1/1. Its pathway is purine metabolism; IMP biosynthesis via de novo pathway; IMP from 5-formamido-1-(5-phospho-D-ribosyl)imidazole-4-carboxamide: step 1/1. The polypeptide is Bifunctional purine biosynthesis protein PurH (Escherichia coli O9:H4 (strain HS)).